Here is a 535-residue protein sequence, read N- to C-terminus: Bifunctional purine biosynthesis protein PurH (535 aa).

One can recognise an MGS-like domain in the interval 6–151 (TRLPIRRALI…KNHKDVAIVV (146 aa)).

This sequence belongs to the PurH family.

It carries out the reaction (6R)-10-formyltetrahydrofolate + 5-amino-1-(5-phospho-beta-D-ribosyl)imidazole-4-carboxamide = 5-formamido-1-(5-phospho-D-ribosyl)imidazole-4-carboxamide + (6S)-5,6,7,8-tetrahydrofolate. The enzyme catalyses IMP + H2O = 5-formamido-1-(5-phospho-D-ribosyl)imidazole-4-carboxamide. It functions in the pathway purine metabolism; IMP biosynthesis via de novo pathway; 5-formamido-1-(5-phospho-D-ribosyl)imidazole-4-carboxamide from 5-amino-1-(5-phospho-D-ribosyl)imidazole-4-carboxamide (10-formyl THF route): step 1/1. It participates in purine metabolism; IMP biosynthesis via de novo pathway; IMP from 5-formamido-1-(5-phospho-D-ribosyl)imidazole-4-carboxamide: step 1/1. This is Bifunctional purine biosynthesis protein PurH from Pseudomonas fluorescens (strain ATCC BAA-477 / NRRL B-23932 / Pf-5).